Here is a 113-residue protein sequence, read N- to C-terminus: UPF0102 protein Shal_4069 (113 aa).

It belongs to the UPF0102 family.

The polypeptide is UPF0102 protein Shal_4069 (Shewanella halifaxensis (strain HAW-EB4)).